A 213-amino-acid chain; its full sequence is GTP cyclohydrolase 1 (213 aa).

Cysteine 104, histidine 107, and cysteine 175 together coordinate Zn(2+).

This sequence belongs to the GTP cyclohydrolase I family. Homomer.

It carries out the reaction GTP + H2O = 7,8-dihydroneopterin 3'-triphosphate + formate + H(+). The protein operates within cofactor biosynthesis; 7,8-dihydroneopterin triphosphate biosynthesis; 7,8-dihydroneopterin triphosphate from GTP: step 1/1. The sequence is that of GTP cyclohydrolase 1 from Brucella canis (strain ATCC 23365 / NCTC 10854 / RM-666).